A 301-amino-acid polypeptide reads, in one-letter code: Probable alpha-L-glutamate ligase (301 aa).

The ATP-grasp domain maps to 104 to 287 (LQLMSRKGLG…VASMIIKHIE (184 aa)). Residues lysine 141, 178–179 (EY), aspartate 187, and 211–213 (RSN) each bind ATP. Residues aspartate 248, glutamate 260, and asparagine 262 each coordinate Mg(2+). The Mn(2+) site is built by aspartate 248, glutamate 260, and asparagine 262.

Belongs to the RimK family. Mg(2+) serves as cofactor. Mn(2+) is required as a cofactor.

This Marinomonas sp. (strain MWYL1) protein is Probable alpha-L-glutamate ligase.